Here is an 865-residue protein sequence, read N- to C-terminus: Alanine--tRNA ligase (865 aa).

Residues His556, His560, Cys660, and His664 each contribute to the Zn(2+) site.

Belongs to the class-II aminoacyl-tRNA synthetase family. Zn(2+) serves as cofactor.

Its subcellular location is the cytoplasm. It catalyses the reaction tRNA(Ala) + L-alanine + ATP = L-alanyl-tRNA(Ala) + AMP + diphosphate. Catalyzes the attachment of alanine to tRNA(Ala) in a two-step reaction: alanine is first activated by ATP to form Ala-AMP and then transferred to the acceptor end of tRNA(Ala). Also edits incorrectly charged Ser-tRNA(Ala) and Gly-tRNA(Ala) via its editing domain. This is Alanine--tRNA ligase from Ruthia magnifica subsp. Calyptogena magnifica.